The chain runs to 308 residues: Inactive C-alpha-formylglycine-generating enzyme 2 (308 aa).

The first 33 residues, 1 to 33 (MRSEFWFPSMGSLLPPVLLLWLLSCPRLQLGHA), serve as a signal peptide directing secretion. Residues Cys-163 and Cys-297 are joined by a disulfide bond. N-linked (GlcNAc...) asparagine glycosylation occurs at Asn-198. 8 residues coordinate Ca(2+): Asn-201, Leu-202, Asp-215, Phe-217, Asp-236, Gly-239, Val-241, and Glu-243. Residues 281–291 (RMGNTPDSASD) show a composition bias toward polar residues. The disordered stretch occupies residues 281–308 (RMGNTPDSASDNLGFRCASSAGRPKEDL). Residues 305-308 (KEDL) carry the Non-canonical ER retention motif motif.

The protein belongs to the sulfatase-modifying factor family. As to quaternary structure, homodimer and heterodimer with SUMF1.

The protein resides in the endoplasmic reticulum lumen. Functionally, lacks formylglycine generating activity and is unable to convert newly synthesized inactive sulfatases to their active form. Inhibits the activation of sulfatases by SUMF1. This Mus musculus (Mouse) protein is Inactive C-alpha-formylglycine-generating enzyme 2.